Reading from the N-terminus, the 148-residue chain is Single-stranded DNA-binding protein 2 (148 aa).

The SSB domain maps to 4 to 109 (INSVIIAGNL…IKARRIQFLN (106 aa)).

As to quaternary structure, homotetramer.

The protein is Single-stranded DNA-binding protein 2 (ssb2) of Chlorobaculum tepidum (strain ATCC 49652 / DSM 12025 / NBRC 103806 / TLS) (Chlorobium tepidum).